The sequence spans 241 residues: DNA repair protein RecO (241 aa).

Belongs to the RecO family.

In terms of biological role, involved in DNA repair and RecF pathway recombination. The sequence is that of DNA repair protein RecO from Azobacteroides pseudotrichonymphae genomovar. CFP2.